A 602-amino-acid polypeptide reads, in one-letter code: Protein nessun dorma (602 aa).

A coiled-coil region spans residues 188-208 (AEAKYIQQRLDYLELDLSDAE).

In terms of assembly, interacts (via N-terminus) with both members of the centralspindlin complex, Pav and Tum. Detected in testis (at protein level). Also expressed in ovary.

Its subcellular location is the midbody. Functionally, required during male meiosis for completion of spermatocyte cytokinesis and possibly also required in female germline cells. Also involved in ring canal formation in male and female germline cells. Not essential for cleavage furrow ingression but is required for contractile ring stability and the attachment of the furrowing membrane to the actomyosin ring in late telophase. Displays high binding affinity for beta-galactosides. This Drosophila melanogaster (Fruit fly) protein is Protein nessun dorma.